We begin with the raw amino-acid sequence, 469 residues long: Ribosomal protein uS12 methylthiotransferase RimO (469 aa).

In terms of domain architecture, MTTase N-terminal spans 1-115 (MKFHIITLGC…IGSVVAGGVA (115 aa)). 6 residues coordinate [4Fe-4S] cluster: cysteine 10, cysteine 46, cysteine 78, cysteine 180, cysteine 184, and cysteine 187. Residues 166 to 398 (NKRGPSAYLK…MAVQQVISRA (233 aa)) enclose the Radical SAM core domain. Residues 401 to 469 (ARFVGQTMKV…TDYDLWGEIV (69 aa)) form the TRAM domain.

It belongs to the methylthiotransferase family. RimO subfamily. It depends on [4Fe-4S] cluster as a cofactor.

It localises to the cytoplasm. The enzyme catalyses L-aspartate(89)-[ribosomal protein uS12]-hydrogen + (sulfur carrier)-SH + AH2 + 2 S-adenosyl-L-methionine = 3-methylsulfanyl-L-aspartate(89)-[ribosomal protein uS12]-hydrogen + (sulfur carrier)-H + 5'-deoxyadenosine + L-methionine + A + S-adenosyl-L-homocysteine + 2 H(+). In terms of biological role, catalyzes the methylthiolation of an aspartic acid residue of ribosomal protein uS12. This is Ribosomal protein uS12 methylthiotransferase RimO from Herpetosiphon aurantiacus (strain ATCC 23779 / DSM 785 / 114-95).